Here is a 1093-residue protein sequence, read N- to C-terminus: Isoleucine--tRNA ligase, chloroplastic/mitochondrial (1093 aa).

Residues 69–103 (PNNEFGHSSKRRSRGPVMAAKKASEGEKQEDGKYK) are disordered. Positions 90 to 103 (KASEGEKQEDGKYK) are enriched in basic and acidic residues. Residues 155–165 (PYANGDLHMGH) carry the 'HIGH' region motif. Position 682 (Glu682) interacts with L-isoleucyl-5'-AMP. Positions 723–727 (KMSKS) match the 'KMSKS' region motif. Residue Lys726 participates in ATP binding. Residues Cys1050, Cys1053, Cys1070, and Cys1073 each coordinate Zn(2+).

This sequence belongs to the class-I aminoacyl-tRNA synthetase family.

The protein resides in the plastid. It localises to the chloroplast. It is found in the mitochondrion. It carries out the reaction tRNA(Ile) + L-isoleucine + ATP = L-isoleucyl-tRNA(Ile) + AMP + diphosphate. The sequence is that of Isoleucine--tRNA ligase, chloroplastic/mitochondrial from Arabidopsis thaliana (Mouse-ear cress).